Reading from the N-terminus, the 530-residue chain is AarF domain-containing protein kinase 1 (530 aa).

The Protein kinase domain occupies 155–467; sequence SFDDTPLGTA…ASSFLNMSRC (313 aa). ATP-binding positions include 161–169 and lysine 183; that span reads LGTASLAQV. The active-site Proton acceptor is the aspartate 315.

This sequence belongs to the protein kinase superfamily. ADCK protein kinase family.

The protein resides in the mitochondrion. Functionally, appears to be essential for maintaining mitochondrial cristae formation and mitochondrial function by acting via YME1L1 in a kinase-independent manner to regulate essential mitochondrial structural proteins OPA1 and IMMT. The action of this enzyme is not yet clear. It is not known if it has protein kinase activity and what type of substrate it would phosphorylate (Ser, Thr or Tyr). The protein is AarF domain-containing protein kinase 1 of Homo sapiens (Human).